A 371-amino-acid polypeptide reads, in one-letter code: Cytochrome b (371 aa).

The next 4 helical transmembrane spans lie at 25–45 (FGSM…FLAI), 69–90 (WTMQ…YTHI), 105–125 (WLSG…GYVL), and 170–190 (FFAL…VHII). Heme b is bound by residues His75 and His89. Residues His174 and His188 each coordinate heme b. His193 is a binding site for a ubiquinone. The next 4 helical transmembrane spans lie at 218–238 (YKDM…MSFS), 280–300 (LGGT…PFTH), 312–332 (FTQL…WTAT), and 339–358 (FILI…IINP).

It belongs to the cytochrome b family. The cytochrome bc1 complex contains 3 respiratory subunits (MT-CYB, CYC1 and UQCRFS1), 2 core proteins (UQCRC1 and UQCRC2) and probably 6 low-molecular weight proteins. Requires heme b as cofactor.

The protein resides in the mitochondrion inner membrane. Component of the ubiquinol-cytochrome c reductase complex (complex III or cytochrome b-c1 complex) that is part of the mitochondrial respiratory chain. The b-c1 complex mediates electron transfer from ubiquinol to cytochrome c. Contributes to the generation of a proton gradient across the mitochondrial membrane that is then used for ATP synthesis. In Elapognathus coronatus (Western crowned snake), this protein is Cytochrome b (MT-CYB).